We begin with the raw amino-acid sequence, 467 residues long: Nuclear distribution protein nudF 1 (467 aa).

In terms of domain architecture, LisH spans 9–41; the sequence is QAEELHKSIIAYLASVNLSESATTLRAELGDAV. Residues 60-87 are a coiled coil; that stretch reads TSVVRLQKKIMDLESRCAALQSELDSAT. 8 WD repeats span residues 113-154, 156-196, 200-247, 250-289, 292-352, 354-393, 398-428, and 429-466; these read SHRS…RTVK, HTKA…KNIR, GHDH…CVKT, GHVD…TRST, GHEH…IKTL, GHDN…KCVR, THEH…NGTP, and AATT…RVFA. Low complexity predominate over residues 417-437; sequence GANGDAGANGTPAATTTSNGA. A disordered region spans residues 417-441; sequence GANGDAGANGTPAATTTSNGARQDP.

It belongs to the WD repeat LIS1/nudF family. As to quaternary structure, self-associates. Interacts with nudE and dynein.

The protein resides in the cytoplasm. It localises to the cytoskeleton. It is found in the spindle pole. Its function is as follows. Positively regulates the activity of the minus-end directed microtubule motor protein dynein. May enhance dynein-mediated microtubule sliding by targeting dynein to the microtubule plus end. Required for nuclear migration during vegetative growth as well as development. Required for retrograde early endosome (EE) transport from the hyphal tip. Required for localization of dynein to the mitotic spindle poles. Recruits additional proteins to the dynein complex at SPBs. The protein is Nuclear distribution protein nudF 1 of Aspergillus clavatus (strain ATCC 1007 / CBS 513.65 / DSM 816 / NCTC 3887 / NRRL 1 / QM 1276 / 107).